The primary structure comprises 61 residues: Temporin-MT3 (61 aa).

The N-terminal stretch at 1-22 (MFTLKKPLLLLFFLGTINLSLC) is a signal peptide. Positions 23 to 44 (EQERNAEEERRDEPDERNAEVE) are cleaved as a propeptide — removed in mature form. L59 bears the Leucine amide mark.

This sequence belongs to the frog skin active peptide (FSAP) family. Temporin subfamily. As to expression, expressed by the skin glands.

The protein localises to the secreted. Functionally, antimicrobial peptide. This is Temporin-MT3 from Amolops mantzorum (Sichuan torrent frog).